The following is a 461-amino-acid chain: Phosphatidate cytidylyltransferase 1 (461 aa).

The interval M1–R67 is disordered. R7 is subject to Omega-N-methylarginine. Over residues P20–S56 the composition is skewed to basic and acidic residues. S35 and S37 each carry phosphoserine. The next 6 helical transmembrane spans lie at M96–L116, F149–F169, H183–V203, L230–I250, G279–S299, and I357–F377.

The protein belongs to the CDS family. In terms of assembly, homodimer. Interacts with FOS; this interaction may enhance catalytic activity. It depends on Mg(2+) as a cofactor. Expressed in adult tissues such as placenta, brain, small intestine, ovary, testis and prostate. Highly expressed in fetal kidney, lung and brain. Lower level in fetal liver.

The protein resides in the endoplasmic reticulum membrane. The catalysed reaction is a 1,2-diacyl-sn-glycero-3-phosphate + CTP + H(+) = a CDP-1,2-diacyl-sn-glycerol + diphosphate. The enzyme catalyses 1-octadecanoyl-2-(5Z,8Z,11Z,14Z-eicosatetraenoyl)-sn-glycero-3-phosphate + CTP + H(+) = 1-octadecanoyl-2-(5Z,8Z,11Z,14Z-eicosatetraenoyl)-sn-glycero-3-cytidine-5'-diphosphate + diphosphate. It carries out the reaction 1-octadecanoyl-2-(9Z,12Z-octadecadienoyl)-sn-glycero-3-phosphate + CTP + H(+) = 1-octadecanoyl-2-(9Z,12Z-octadecadienoyl)-sn-glycero-3-cytidine-5'-diphosphate + diphosphate. It catalyses the reaction 1-hexadecanoyl-2-(5Z,8Z,11Z,14Z-eicosatetraenoyl)-sn-glycero-3-phosphate + CTP + H(+) = 1-hexadecanoyl-2-(5Z,8Z,11Z,14Z-eicosatetraenoyl)-sn-glycero-3-cytidine-5'-diphosphate + diphosphate. The catalysed reaction is 1,2-di-(5Z,8Z,11Z,14Z)-eicosatetraenoyl-sn-glycero-3-phosphate + CTP + H(+) = 1,2-di-(5Z,8Z,11Z,14Z-eicosatetraenoyl)-sn-glycero-3-cytidine-5'-diphosphate + diphosphate. The enzyme catalyses 1-octadecanoyl-2-(9Z-octadecenoyl)-sn-glycero-3-phosphate + CTP + H(+) = 1-octadecanoyl-2-(9Z-octadecenoyl)-sn-glycero-3-cytidine-5'-diphosphate + diphosphate. It carries out the reaction 1-octadecanoyl-2-(4Z,7Z,10Z,13Z,16Z,19Z-docosahexaenoyl)-sn-glycero-3-phosphate + CTP + H(+) = 1-octadecanoyl-2-(4Z,7Z,10Z,13Z,16Z,19Z-docosahexaenoyl)-sn-glycero-3-cytidine-5'-diphosphate + diphosphate. It catalyses the reaction 1,2-di-(9Z,12Z-octadecadienoyl)-sn-glycero-3-phosphate + CTP + H(+) = 1,2-di-(9Z,12Z-octadecadienoyl)-sn-glycero-3-cytidine-5'-diphosphate + diphosphate. The catalysed reaction is 1,2-di-(9Z-octadecenoyl)-sn-glycero-3-phosphate + CTP + H(+) = 1,2-di-(9Z-octadecenoyl)-sn-glycero-3-cytidine-5'-diphosphate + diphosphate. It functions in the pathway phospholipid metabolism; CDP-diacylglycerol biosynthesis; CDP-diacylglycerol from sn-glycerol 3-phosphate: step 3/3. Its activity is regulated as follows. Inhibited by its anionic phospholipid end products, with phosphatidylinositol-(4,5)- bisphosphate showing the strongest inhibition. Catalyzes the conversion of phosphatidic acid (PA) to CDP-diacylglycerol (CDP-DAG), an essential intermediate in the synthesis of phosphatidylglycerol, cardiolipin and phosphatidylinositol. Exhibits almost no acyl chain preference for PA, showing no discrimination for the sn-1/sn-2 acyl chain composition of PAs. Plays an important role in regulating the growth of lipid droplets which are storage organelles at the center of lipid and energy homeostasis. Positively regulates the differentiation and development of adipocytes. The chain is Phosphatidate cytidylyltransferase 1 from Homo sapiens (Human).